The following is a 596-amino-acid chain: Endoribonuclease ZC3H12A (596 aa).

2 disordered regions span residues 1–48 (MSDP…TSEL) and 97–134 (QALTAPSPQPPLVPRGGSTPKPSTLEPSLPEEDREGSD). Over residues 10–19 (VQESNPTMSL) the composition is skewed to polar residues. The ubiquitin association domain stretch occupies residues 42 to 87 (EAPTSELQMKVDFFRKLGYSSSEIHSVLQKLGVQADTNTVLGELVK). The segment at 81–150 (VLGELVKHGS…DGSNVAMSHG (70 aa)) is necessary for interaction with TANK. The RNase stretch occupies residues 112–281 (GGSTPKPSTL…DKFMPPDDPL (170 aa)). In terms of domain architecture, RNase NYN spans 135–290 (LRPVVIDGSN…LGRHGPSLDN (156 aa)). Residues 214 to 220 (RRVGGKR) are RNA binding. Asp-226 contacts Mg(2+). 2 disordered regions span residues 278–306 (DDPLGRHGPSLDNFLRKKPLPSEHRKQPC) and 340–417 (NALL…PTEW). The segment at 301–324 (HRKQPCPYGKKCTYGIKCRFFHPE) adopts a C3H1-type zinc-finger fold. Positions 301–454 (HRKQPCPYGK…SELWGVRGGS (154 aa)) are necessary for interaction with ZC3H12D. Ser-344 is subject to Phosphoserine. Residues 356-368 (QRPSPASQSSSVS) show a composition bias toward low complexity. 2 positions are modified to phosphoserine: Ser-435 and Ser-439. Residues 511–543 (YWSEPYPLPPPTPVLQEPQRPSPGAGGGPWGRV) are disordered. Residues 524–533 (VLQEPQRPSP) show a composition bias toward low complexity.

The protein belongs to the ZC3H12 family. Oligomer. Found in a deubiquitination complex with TANK, USP10 and ZC3H12A; this complex inhibits genotoxic stress- or interleukin-1-beta-mediated NF-kappaB activation by promoting IKBKG or TRAF6 deubiquitination. Interacts with IKBKG; this interaction increases in response to DNA damage. Interacts with TANK; this interaction increases in response to DNA damage and serves as a bridge to anchor both TANK and USP10 into a deubiquitinating complex. Interacts with TRAF6; this interaction increases in response to DNA damage and is stimulated by TANK. Interacts with USP10; this interaction increases in response to DNA damage and serves as a bridge to anchor both TANK and USP10 into a deubiquitinating complex. Interacts with ZC3H12D. Interacts with TNRC6A. Interacts with IKBKB/IKKB. Interacts with IKBKB/IKKB. Interacts with IKBKB/IKKB. Interacts with BTRC; the interaction occurs when ZC3H12A is phosphorylated in a IKBKB/IKKB-dependent manner. Interacts with IRAK1; this interaction increases the interaction between ZC3H12A and IKBKB/IKKB. Interacts with UPF1; this interaction occurs in a mRNA translationally active- and termination-dependent manner and is essential for ZC3H12A-mediated degradation of target mRNAs. Associates with ribosomes. Interacts with ubiquitin. Mg(2+) serves as cofactor. Proteolytically cleaved between Arg-111 and Arg-214 by MALT1 in activated T-cells; cleavage at Arg-111 is critical for promoting ZC3H12A degradation in response to T-cell receptor (TCR) stimulation, and hence is necessary for prolonging the stability of a set of mRNAs controlling T-cell activation and Th17 cell differentiation. Post-translationally, phosphorylated by IRAK1; phosphorylation is necessary for subsequent phosphorylation by the I-kappa-B-kinase (IKK) complex. Phosphorylated by I-kappa-B-kinases (IKKs) at Ser-435 and Ser-439 upon lipopolysaccharide (LPS) or IL1B stimulation in macrophages through the MyD88-dependent signaling pathway; these phosphorylations promote rapid ubiquitin proteasome-mediated degradation of ZC3H12A in macrophages and hence allows its target mRNAs, such as IL6, to escape from degradation and accumulate during the inflammatory response. In terms of processing, ubiquitinated; ubiquitination is induced in response to interleukin IL1 receptor stimuli in a IKBKB/IKKB and IRAK1-dependent manner, leading to proteasome-mediated degradation. As to expression, expressed in CD4(+) helper T-cells (at protein level). Highly expressed in macrophages. Expressed in lung, lymph nodes, spleen and thymus. Expressed weakly in heart. Expressed weakly in cardiomyocytes (at protein level). Expressed in spleen, lung, intestine, brown adipose tissue and thymus. Weakly expressed in the heart. Weakly expressed in cardiomyocytes.

Its subcellular location is the nucleus. It is found in the cytoplasm. It localises to the rough endoplasmic reticulum membrane. The protein localises to the cytoplasmic granule. The protein resides in the P-body. Functionally, endoribonuclease involved in various biological functions such as cellular inflammatory response and immune homeostasis, glial differentiation of neuroprogenitor cells, cell death of cardiomyocytes, adipogenesis and angiogenesis. Functions as an endoribonuclease involved in mRNA decay. Modulates the inflammatory response by promoting the degradation of a set of translationally active cytokine-induced inflammation-related mRNAs, such as IL6 and IL12B, during the early phase of inflammation. Prevents aberrant T-cell-mediated immune reaction by degradation of multiple mRNAs controlling T-cell activation, such as those encoding cytokines (IL6 and IL2), cell surface receptors (ICOS, TNFRSF4 and TNFR2) and transcription factor (REL). Inhibits cooperatively with ZC3H12A the differentiation of helper T cells Th17 in lungs. They repress target mRNA encoding the Th17 cell-promoting factors IL6, ICOS, REL, IRF4, NFKBID and NFKBIZ. The cooperation requires RNA-binding by RC3H1 and the nuclease activity of ZC3H12A. Together with RC3H1, destabilizes TNFRSF4/OX40 mRNA by binding to the conserved stem loop structure in its 3'UTR. Self regulates by destabilizing its own mRNA. Cleaves mRNA harboring a stem-loop (SL), often located in their 3'-UTRs, during the early phase of inflammation in a helicase UPF1-dependent manner. Plays a role in the inhibition of microRNAs (miRNAs) biogenesis. Cleaves the terminal loop of a set of precursor miRNAs (pre-miRNAs) important for the regulation of the inflammatory response leading to their degradation, and thus preventing the biosynthesis of mature miRNAs. Also plays a role in promoting angiogenesis in response to inflammatory cytokines by inhibiting the production of antiangiogenic microRNAs via its anti-dicer RNase activity. Affects the overall ubiquitination of cellular proteins. Positively regulates deubiquitinase activity promoting the cleavage at 'Lys-48'- and 'Lys-63'-linked polyubiquitin chains on TNF receptor-associated factors (TRAFs), preventing JNK and NF-kappa-B signaling pathway activation, and hence negatively regulating macrophage-mediated inflammatory response and immune homeostasis. Induces also deubiquitination of the transcription factor HIF1A, probably leading to its stabilization and nuclear import, thereby positively regulating the expression of proangiogenic HIF1A-targeted genes. Involved in a TANK-dependent negative feedback response to attenuate NF-kappaB activation through the deubiquitination of IKBKG or TRAF6 in response to interleukin-1-beta (IL1B) stimulation or upon DNA damage. Prevents stress granules (SGs) formation and promotes macrophage apoptosis under stress conditions, including arsenite-induced oxidative stress, heat shock, and energy deprivation. Plays a role in the regulation of macrophage polarization; promotes IL4-induced polarization of macrophages M1 into anti-inflammatory M2 state. May also act as a transcription factor that regulates the expression of multiple genes involved in inflammatory response, angiogenesis, adipogenesis and apoptosis. Functions as a positive regulator of glial differentiation of neuroprogenitor cells through an amyloid precursor protein (APP)-dependent signaling pathway. Attenuates septic myocardial contractile dysfunction in response to lipopolysaccharide (LPS) by reducing I-kappa-B-kinase (IKK)-mediated NF-kappa-B activation, and hence myocardial pro-inflammatory cytokine production. This chain is Endoribonuclease ZC3H12A, found in Mus musculus (Mouse).